Consider the following 90-residue polypeptide: Small ribosomal subunit protein bS18 (90 aa).

A disordered region spans residues 1-23 (MKPMRQKNTRAQGNKSISNALAS). Residues 9-21 (TRAQGNKSISNAL) show a composition bias toward polar residues.

This sequence belongs to the bacterial ribosomal protein bS18 family. In terms of assembly, part of the 30S ribosomal subunit. Forms a tight heterodimer with protein bS6.

Functionally, binds as a heterodimer with protein bS6 to the central domain of the 16S rRNA, where it helps stabilize the platform of the 30S subunit. The sequence is that of Small ribosomal subunit protein bS18 from Chlorobium luteolum (strain DSM 273 / BCRC 81028 / 2530) (Pelodictyon luteolum).